The chain runs to 320 residues: Aldose reductase (320 aa).

Catalysis depends on Tyr60, which acts as the Proton donor. Residue His121 participates in substrate binding. 215–269 (SPLGSSEKNLAHDPVVEKVANKLNKTPGQVLIKWALQRGTSVIPKSSKDERIKEN) is a binding site for NADP(+).

This sequence belongs to the aldo/keto reductase family.

The catalysed reaction is an alditol + NAD(+) = an aldose + NADH + H(+). It catalyses the reaction an alditol + NADP(+) = an aldose + NADPH + H(+). In Hordeum vulgare (Barley), this protein is Aldose reductase.